The chain runs to 294 residues: Protein huluwa (294 aa).

At 1-23 the chain is on the extracellular side; sequence MSQLGSAVPSSNLPEGLPVSSLA. A helical membrane pass occupies residues 24 to 44; sequence LLILVLIPCVLLLLLLNCLFV. The Cytoplasmic portion of the chain corresponds to 45 to 294; that stretch reads GYKLFRMTRR…PPITTKQYWV (250 aa). A disordered region spans residues 154–175; sequence SDSDMERVNTVPPNSPVLRVTP. A VPPNSP motif motif is present at residues 164–169; that stretch reads VPPNSP. The SLRRSST motif signature appears at 184–190; the sequence is SLRRSST.

Belongs to the huluwa family. In terms of assembly, interacts with axin1; leading to promote the tankyrase-mediated degradation of axin. Interacts with axin2; leading to promote the tankyrase-mediated degradation of axin.

The protein localises to the cell membrane. Key maternal determinant of the dorsal organizer and body axis formation in vertebrates that acts by promoting stabilization of beta-catenin (ctnnb1). Localizes on the plasma membrane of the future dorsal blastomeres in early blastulas and binds to and promotes the tankyrase-mediated degradation of axin (axin1 and axin2). Axin degradation results in stabilization and nuclear translocation of beta-catenin (ctnnb1) for activating organizer-specific target gene expression. The sequence is that of Protein huluwa from Danio rerio (Zebrafish).